Reading from the N-terminus, the 715-residue chain is DNA ligase (715 aa).

Residues 47–51, 96–97, and Glu129 contribute to the NAD(+) site; these read DADYD and SL. The active-site N6-AMP-lysine intermediate is Lys131. NAD(+) is bound by residues Arg152, Glu189, Lys306, and Lys330. Residues Cys435, Cys438, Cys453, and Cys459 each coordinate Zn(2+). Positions 637 to 715 constitute a BRCT domain; it reads KRDSAVAGKT…EDEWLALIQG (79 aa).

This sequence belongs to the NAD-dependent DNA ligase family. LigA subfamily. It depends on Mg(2+) as a cofactor. Mn(2+) is required as a cofactor.

The catalysed reaction is NAD(+) + (deoxyribonucleotide)n-3'-hydroxyl + 5'-phospho-(deoxyribonucleotide)m = (deoxyribonucleotide)n+m + AMP + beta-nicotinamide D-nucleotide.. DNA ligase that catalyzes the formation of phosphodiester linkages between 5'-phosphoryl and 3'-hydroxyl groups in double-stranded DNA using NAD as a coenzyme and as the energy source for the reaction. It is essential for DNA replication and repair of damaged DNA. In Rhodopseudomonas palustris (strain BisA53), this protein is DNA ligase.